A 386-amino-acid chain; its full sequence is Branched-chain-amino-acid aminotransferase, cytosolic (386 aa).

Residue Met-1 is modified to N-acetylmethionine. Lys-222 bears the N6-(pyridoxal phosphate)lysine mark.

The protein belongs to the class-IV pyridoxal-phosphate-dependent aminotransferase family. Homodimer. The cofactor is pyridoxal 5'-phosphate. As to expression, expressed in brain and kidney. Overexpressed in MYC-induced brain tumors, lymphomas, as well as in a teratocarcinoma cell line.

The protein resides in the cytoplasm. It catalyses the reaction L-leucine + 2-oxoglutarate = 4-methyl-2-oxopentanoate + L-glutamate. The enzyme catalyses L-isoleucine + 2-oxoglutarate = (S)-3-methyl-2-oxopentanoate + L-glutamate. The catalysed reaction is L-valine + 2-oxoglutarate = 3-methyl-2-oxobutanoate + L-glutamate. Functionally, catalyzes the first reaction in the catabolism of the essential branched chain amino acids leucine, isoleucine, and valine. The sequence is that of Branched-chain-amino-acid aminotransferase, cytosolic (Bcat1) from Mus musculus (Mouse).